We begin with the raw amino-acid sequence, 407 residues long: MYSTPAPPEVTRRNSEPSTRQGTLGSLQGEKGQIIFPGFVVLLTIILVIIAACILWSWKKQKKRPVPYFQVAPSLTLPPPRHRAKNIYDFLPRQQTELGRHQLSGFSTESLLSRASDSPEPEAPQANGSLQMHRVSVHTVEYSVNIYDNGTVPQMCRHLASSTHHVCVRTSRSNPSISSKESNDYVNIPTVEDTCETLTRIESTPENHLGLPSALRLEFAEGGHAGCGNATDHDGFWAPGPKCSDSLSDGDDLSQTSNDYVNMTGLDLENIQENRPRGAFQCCRDYENVPWVDTNESQLPTLEEVASSTVDHREPVWRTLSSVYHMAFQPSAQSEDSAMVHREEQSSEDSSDYETVLVAELEGRDWKQGPGTQHPSDEGTPGDLAGKLCEVVYPAGSLATETSDEDA.

The tract at residues 1–25 is disordered; sequence MYSTPAPPEVTRRNSEPSTRQGTLG. Topologically, residues 1–33 are extracellular; it reads MYSTPAPPEVTRRNSEPSTRQGTLGSLQGEKGQ. Over residues 16–25 the composition is skewed to polar residues; sequence EPSTRQGTLG. The chain crosses the membrane as a helical; Signal-anchor for type III membrane protein span at residues 34–54; the sequence is IIFPGFVVLLTIILVIIAACI. Topologically, residues 55–407 are cytoplasmic; the sequence is LWSWKKQKKR…LATETSDEDA (353 aa). Positions 109 to 131 are disordered; the sequence is ESLLSRASDSPEPEAPQANGSLQ. Residues Tyr-185, Tyr-260, Tyr-286, and Tyr-353 each carry the phosphotyrosine modification. The tract at residues 331-388 is disordered; sequence SAQSEDSAMVHREEQSSEDSSDYETVLVAELEGRDWKQGPGTQHPSDEGTPGDLAGKL.

In terms of assembly, when phosphorylated, interacts with GRB2, PIK3R1 and GRAP2. Post-translationally, phosphorylated on tyrosines upon TCR or BCR activation; which leads to the recruitment of GRB2, PIK3R1 and GRAP2. In terms of tissue distribution, expressed in T-cells and B-cells.

It is found in the cell membrane. Negatively regulates TCR (T-cell antigen receptor)-mediated signaling in T-cells and BCR (B-cell antigen receptor)-mediated signaling in B-cells. This Mus musculus (Mouse) protein is Lymphocyte transmembrane adapter 1 (Lax1).